The following is a 303-amino-acid chain: Coenzyme PQQ synthesis protein B (303 aa).

It belongs to the PqqB family.

The protein operates within cofactor biosynthesis; pyrroloquinoline quinone biosynthesis. In terms of biological role, may be involved in the transport of PQQ or its precursor to the periplasm. The polypeptide is Coenzyme PQQ synthesis protein B (Pseudomonas putida (strain GB-1)).